Reading from the N-terminus, the 285-residue chain is Ubiquinone biosynthesis protein COQ4, mitochondrial (285 aa).

The transit peptide at 1-11 directs the protein to the mitochondrion; the sequence is MPPTVRQGIRT. 4 residues coordinate Zn(2+): H166, D167, H170, and E182.

It belongs to the COQ4 family. In terms of assembly, component of a multi-subunit COQ enzyme complex, composed of at least COQ3, COQ4, COQ5, COQ6, COQ7 and COQ9. It depends on Zn(2+) as a cofactor.

It localises to the mitochondrion inner membrane. The enzyme catalyses a 4-hydroxy-3-methoxy-5-(all-trans-polyprenyl)benzoate + H(+) = a 2-methoxy-6-(all-trans-polyprenyl)phenol + CO2. Its pathway is cofactor biosynthesis; ubiquinone biosynthesis. Its function is as follows. Lyase that catalyzes the C1-decarboxylation of 4-hydroxy-3-methoxy-5-(all-trans-polyprenyl)benzoic acid into 2-methoxy-6-(all-trans-polyprenyl)phenol during ubiquinone biosynthesis. This chain is Ubiquinone biosynthesis protein COQ4, mitochondrial, found in Paracoccidioides brasiliensis (strain Pb18).